The chain runs to 382 residues: Sulfate adenylyltransferase (382 aa).

The protein belongs to the sulfate adenylyltransferase family.

It carries out the reaction sulfate + ATP + H(+) = adenosine 5'-phosphosulfate + diphosphate. It functions in the pathway sulfur metabolism; hydrogen sulfide biosynthesis; sulfite from sulfate: step 1/3. This Ignicoccus hospitalis (strain KIN4/I / DSM 18386 / JCM 14125) protein is Sulfate adenylyltransferase.